Reading from the N-terminus, the 999-residue chain is MIQSSLYRALNKGFDYQILACKDFKESELAKEVISYFKPNTKAILFPEFRAKKNDDLRSFFEEFLQLLGGLREFYQALENKQETIIIAPISALLHPLPKKELLESFKITLLEKYNLKDLKDKLFYYGYEILDLVEVEGEASFRGDIVDIYAPNSKAYRLSFFDTECESIKEFDPITQMSLKEDLLEIEIPPTLFSLDESSYKDLKTKVEQSPLNSFSKDLTSFGLWFLGEKAQDLLIVYKSIISPRALEEIQELASLNELDCERFKFLKVLENAQGYEDLEIHAHALEGFIALHSNHKITLLAPNKTILDNAISALDAGNMECVIAPFVLNFKTPDGIFISLNSFERKKKRQKSKLALNELNPGEWVVHDDYGVGVFSQLVQHSVLGSKRDFLEIAYLGEDKLLLPVENLHLIARYVAQSDSVPAKDRLGKGSFLKLKAKVRTKLLEIASKIIELAAERNLILGKKMDVHLAELEVFKSHAGFEYTSDQEKAIAEISKDLSSHRVMDRLLSGDVGFGKTEVAMHAIFCAFLNGFQSALVVPTTLLAHQHFETLRARFENFGVKVARLDRYASEKNKLLKAVELGQVDALIGTHAILGAKFKNLGLVVVDEEHKFGVKQKEALKELSKSVHFLSMSATPIPRTLNMALSQIKGISSLKTPPTDRKPSRTFLKEKNDELLKEIIYRELRRNGQIFYIHNHIASILKVKTKLEDLIPKLKIAILHSQINANESEEIMLEFAKGNYQVLLCTSIVESGIHLPNANTIIIDNAQNFGLADLHQLRGRVGRGKKEGFCYFLIEDQKSLNEQALKRLLALEKNSYLGSGESVAYHDLEIRGGGNLLGQDQSGHIKNIGYALYTRMLEDAIYELSGGKKRLEKSVEIQLGVSAFLNPELIASDSLRLDLYRRLSLCENTDEVGQIHEEIEDRFGKIDDLSAQFLQIITLKILANQLGIIKLSNFNQNITITYSDEKKESLKAPSKDDNDILETLLKHLRAQISLKRR.

The Helicase ATP-binding domain maps to 499–656; it reads DLSSHRVMDR…LSQIKGISSL (158 aa). ATP is bound at residue 512–519; it reads GDVGFGKT. The DEEH box motif lies at 609–612; it reads DEEH. A Helicase C-terminal domain is found at 677–833; the sequence is LLKEIIYREL…SVAYHDLEIR (157 aa).

It in the N-terminal section; belongs to the UvrB family. In the C-terminal section; belongs to the helicase family. RecG subfamily.

The protein resides in the cytoplasm. In terms of biological role, couples transcription and DNA repair by recognizing RNA polymerase (RNAP) stalled at DNA lesions. Mediates ATP-dependent release of RNAP and its truncated transcript from the DNA, and recruitment of nucleotide excision repair machinery to the damaged site. This is Transcription-repair-coupling factor from Helicobacter pylori (strain ATCC 700392 / 26695) (Campylobacter pylori).